Consider the following 409-residue polypeptide: MSVFDSKFKGIHVYSEIGELETVLVHEPGKEIDYITPARLDELLFSAILESHDARKEHKEFVAELKKRGINVVELVDLIVETYDLASKEAKEKLLEEFLDDSVPVLSDEHRAAVKKFLQSQKSTRSLVEYMIAGITKHDLKIESDLELIVDPMPNLYFTRDPFASVGNGVTIHYMRYKVRQRETLFSRFVFSNHPKLVNTPWYYDPAEGLSIEGGDVFIYNNDTLVVGVSERTDLQTITLLAKNIKANKECEFKRIVAINVPKWTNLMHLDTWLTMLDKDKFLYSPIANDVFKFWDYDLVNGGDAPQPVDNGLPLEDLLKSIIGKKPTLIPIAGAGASQIDIERETHFDGTNYLAVAPGIVIGYARNEKTNAALEAAGITVLPFRGNQLSLGMGNARCMSMPLSRKDVK.

Residue Cys398 is the Amidino-cysteine intermediate of the active site.

The protein belongs to the arginine deiminase family.

It is found in the cytoplasm. The enzyme catalyses L-arginine + H2O = L-citrulline + NH4(+). Its pathway is amino-acid degradation; L-arginine degradation via ADI pathway; carbamoyl phosphate from L-arginine: step 1/2. This chain is Arginine deiminase, found in Metamycoplasma arthritidis (strain 158L3-1) (Mycoplasma arthritidis).